The following is a 379-amino-acid chain: Succinyl-diaminopimelate desuccinylase (379 aa).

Residue H70 participates in Zn(2+) binding. D72 is a catalytic residue. D103 contacts Zn(2+). E137 serves as the catalytic Proton acceptor. Residues E138, E166, and H352 each coordinate Zn(2+).

It belongs to the peptidase M20A family. DapE subfamily. Homodimer. Zn(2+) serves as cofactor. Co(2+) is required as a cofactor.

It catalyses the reaction N-succinyl-(2S,6S)-2,6-diaminopimelate + H2O = (2S,6S)-2,6-diaminopimelate + succinate. Its pathway is amino-acid biosynthesis; L-lysine biosynthesis via DAP pathway; LL-2,6-diaminopimelate from (S)-tetrahydrodipicolinate (succinylase route): step 3/3. Its function is as follows. Catalyzes the hydrolysis of N-succinyl-L,L-diaminopimelic acid (SDAP), forming succinate and LL-2,6-diaminopimelate (DAP), an intermediate involved in the bacterial biosynthesis of lysine and meso-diaminopimelic acid, an essential component of bacterial cell walls. The protein is Succinyl-diaminopimelate desuccinylase of Shewanella baltica (strain OS155 / ATCC BAA-1091).